The following is a 90-amino-acid chain: Small ribosomal subunit protein bS18 (90 aa).

The protein belongs to the bacterial ribosomal protein bS18 family. In terms of assembly, part of the 30S ribosomal subunit. Forms a tight heterodimer with protein bS6.

Its function is as follows. Binds as a heterodimer with protein bS6 to the central domain of the 16S rRNA, where it helps stabilize the platform of the 30S subunit. This Bacteroides fragilis (strain YCH46) protein is Small ribosomal subunit protein bS18.